A 369-amino-acid polypeptide reads, in one-letter code: Small ribosomal subunit biogenesis GTPase RsgA (369 aa).

Residues 88–246 enclose the CP-type G domain; it reads RTVLERPPVA…LADTPGFNQP (159 aa). Residues 137 to 140 and 188 to 196 contribute to the GTP site; these read NKQD and GPSGVGKSS. Zn(2+) contacts are provided by cysteine 271, cysteine 276, histidine 278, and cysteine 284. Positions 307–369 are disordered; it reads QNPENSRETD…DLDNLQEDWE (63 aa). Residues 359-369 show a composition bias toward acidic residues; it reads TDLDNLQEDWE.

It belongs to the TRAFAC class YlqF/YawG GTPase family. RsgA subfamily. Monomer. Associates with 30S ribosomal subunit, binds 16S rRNA. Zn(2+) serves as cofactor.

It is found in the cytoplasm. One of several proteins that assist in the late maturation steps of the functional core of the 30S ribosomal subunit. Helps release RbfA from mature subunits. May play a role in the assembly of ribosomal proteins into the subunit. Circularly permuted GTPase that catalyzes slow GTP hydrolysis, GTPase activity is stimulated by the 30S ribosomal subunit. This chain is Small ribosomal subunit biogenesis GTPase RsgA, found in Synechocystis sp. (strain ATCC 27184 / PCC 6803 / Kazusa).